The sequence spans 301 residues: Glycine--tRNA ligase alpha subunit (301 aa).

The protein belongs to the class-II aminoacyl-tRNA synthetase family. Tetramer of two alpha and two beta subunits.

The protein resides in the cytoplasm. The enzyme catalyses tRNA(Gly) + glycine + ATP = glycyl-tRNA(Gly) + AMP + diphosphate. The protein is Glycine--tRNA ligase alpha subunit of Shewanella oneidensis (strain ATCC 700550 / JCM 31522 / CIP 106686 / LMG 19005 / NCIMB 14063 / MR-1).